Reading from the N-terminus, the 329-residue chain is Malate dehydrogenase (329 aa).

13-19 (GAAGNIS) is an NAD(+) binding site. Residues Arg94 and Arg100 each contribute to the substrate site. NAD(+) contacts are provided by residues Asn107, Gln114, and 131–133 (VGN). Substrate is bound by residues Asn133 and Arg164. The active-site Proton acceptor is the His189.

Belongs to the LDH/MDH superfamily. MDH type 2 family.

The catalysed reaction is (S)-malate + NAD(+) = oxaloacetate + NADH + H(+). Catalyzes the reversible oxidation of malate to oxaloacetate. This chain is Malate dehydrogenase, found in Psychrobacter arcticus (strain DSM 17307 / VKM B-2377 / 273-4).